We begin with the raw amino-acid sequence, 382 residues long: Serine/threonine-protein kinase (382 aa).

Over residues 1-10 the composition is skewed to basic and acidic residues; the sequence is MENKQCDHLT. Residues 1 to 75 are disordered; that stretch reads MENKQCDHLT…ASESDEDDDD (75 aa). The span at 12 to 24 shows a compositional bias: polar residues; the sequence is WFSTTSDASESMD. Acidic residues predominate over residues 45-75; the sequence is ADEDLYSDISEGDLEYSDCDSASESDEDDDD. In terms of domain architecture, Protein kinase spans 93–379; it reads YTVIKTLTPG…AEELLSYPMF (287 aa). Residues 99–107 and lysine 122 each bind ATP; that span reads LTPGSEGRV. The Proton acceptor role is filled by aspartate 207.

It belongs to the protein kinase superfamily. Ser/Thr protein kinase family.

It catalyses the reaction L-seryl-[protein] + ATP = O-phospho-L-seryl-[protein] + ADP + H(+). The catalysed reaction is L-threonyl-[protein] + ATP = O-phospho-L-threonyl-[protein] + ADP + H(+). The protein is Serine/threonine-protein kinase (US2) of Equus caballus (Horse).